The following is a 155-amino-acid chain: Putative pre-16S rRNA nuclease (155 aa).

The protein belongs to the YqgF nuclease family.

It is found in the cytoplasm. Its function is as follows. Could be a nuclease involved in processing of the 5'-end of pre-16S rRNA. The sequence is that of Putative pre-16S rRNA nuclease from Corynebacterium jeikeium (strain K411).